The chain runs to 228 residues: 7-cyano-7-deazaguanine synthase (228 aa).

An ATP-binding site is contributed by 8 to 18 (LSGGLDSTTCL). 4 residues coordinate Zn(2+): cysteine 188, cysteine 198, cysteine 201, and cysteine 204.

This sequence belongs to the QueC family. Zn(2+) is required as a cofactor.

The enzyme catalyses 7-carboxy-7-deazaguanine + NH4(+) + ATP = 7-cyano-7-deazaguanine + ADP + phosphate + H2O + H(+). It participates in purine metabolism; 7-cyano-7-deazaguanine biosynthesis. In terms of biological role, catalyzes the ATP-dependent conversion of 7-carboxy-7-deazaguanine (CDG) to 7-cyano-7-deazaguanine (preQ(0)). This is 7-cyano-7-deazaguanine synthase from Legionella pneumophila subsp. pneumophila (strain Philadelphia 1 / ATCC 33152 / DSM 7513).